Reading from the N-terminus, the 289-residue chain is Inorganic pyrophosphatase (289 aa).

Residue serine 2 is modified to N-acetylserine. Residue lysine 57 is modified to N6-acetyllysine. Mg(2+) contacts are provided by aspartate 116, aspartate 121, and aspartate 153. Serine 250 is subject to Phosphoserine.

Belongs to the PPase family. In terms of assembly, homodimer. The cofactor is Mg(2+). The N-terminus is blocked. In terms of tissue distribution, highest levels are found in retinal rod outer segments.

The protein resides in the cytoplasm. It carries out the reaction diphosphate + H2O = 2 phosphate + H(+). This Bos taurus (Bovine) protein is Inorganic pyrophosphatase (PPA1).